The sequence spans 324 residues: tRNA dimethylallyltransferase (324 aa).

15-22 (GPTATGKS) lines the ATP pocket. Residue 17 to 22 (TATGKS) coordinates substrate. The interval 40–43 (DSAQ) is interaction with substrate tRNA.

Belongs to the IPP transferase family. In terms of assembly, monomer. Mg(2+) serves as cofactor.

It carries out the reaction adenosine(37) in tRNA + dimethylallyl diphosphate = N(6)-dimethylallyladenosine(37) in tRNA + diphosphate. In terms of biological role, catalyzes the transfer of a dimethylallyl group onto the adenine at position 37 in tRNAs that read codons beginning with uridine, leading to the formation of N6-(dimethylallyl)adenosine (i(6)A). The sequence is that of tRNA dimethylallyltransferase from Moorella thermoacetica (strain ATCC 39073 / JCM 9320).